The chain runs to 255 residues: Malonyl-[acyl-carrier protein] O-methyltransferase (255 aa).

This sequence belongs to the methyltransferase superfamily.

The catalysed reaction is malonyl-[ACP] + S-adenosyl-L-methionine = malonyl-[ACP] methyl ester + S-adenosyl-L-homocysteine. It functions in the pathway cofactor biosynthesis; biotin biosynthesis. Converts the free carboxyl group of a malonyl-thioester to its methyl ester by transfer of a methyl group from S-adenosyl-L-methionine (SAM). It allows to synthesize pimeloyl-ACP via the fatty acid synthetic pathway. This chain is Malonyl-[acyl-carrier protein] O-methyltransferase, found in Acinetobacter baylyi (strain ATCC 33305 / BD413 / ADP1).